The chain runs to 1262 residues: Protein stoned-B (1262 aa).

4 consecutive short sequence motifs (NPF) follow at residues 3-5, 19-21, 33-35, and 43-45; these read NPF. The disordered stretch occupies residues 17–36; it reads AANPFLMQSEPEPSSDNPFM. The tract at residues 49–189 is disordered; the sequence is ADDLELGAEP…DVSVDSGSSA (141 aa). Positions 50-60 are enriched in acidic residues; the sequence is DDLELGAEPEA. Positions 101-111 are enriched in low complexity; the sequence is PPQSQPQLQSH. The segment covering 115 to 124 has biased composition (pro residues); that stretch reads HPPPPRPLVP. Over residues 128 to 145 the composition is skewed to polar residues; that stretch reads TQDLISTVSSQLDETSSE. A compositionally biased stretch (low complexity) spans 172 to 189; that stretch reads DSGLADLLDVSVDSGSSA. Residues 210 to 212 carry the NPF 5 motif; it reads NPF. Disordered stretches follow at residues 225 to 452 and 474 to 507; these read VPLP…SPPT and EEMD…NFAP. A compositionally biased stretch (pro residues) spans 233–272; that stretch reads KQPPRPPPPRPAPPRPAPPGQAAPQRPPPPLAAVNPPPAA. Residues 325–345 show a composition bias toward acidic residues; it reads DLDETIGEGEPPEQEEPDTEQ. The segment covering 384-401 has biased composition (polar residues); sequence QVNNMAAPSGTASTQRAT. Over residues 417-429 the composition is skewed to acidic residues; it reads DDEDEPEAMQEPE. An NPF 6 motif is present at residues 493-495; that stretch reads NPF. Phosphoserine is present on residues Ser-623 and Ser-626. The interval 643–709 is disordered; the sequence is SGVAPQLAPP…QDTPQTPLYD (67 aa). Positions 673-675 match the NPF 7 motif; it reads NPF. Residues 728–902 form the SHD domain; it reads GWEMQLRQPN…KIPALRERAL (175 aa). Residues 847-1108 form an interaction with Syt region; sequence KEFGSDLKKL…KGIERILGAV (262 aa). Residues 906–1219 form the MHD domain; sequence MEEVQVTAVD…ARHEYKVGIE (314 aa). Positions 1226-1262 are disordered; sequence TNAYLAATRPIREEPPTTATKPTASPVAPSDSDTDSN. Over residues 1241–1254 the composition is skewed to low complexity; it reads PTTATKPTASPVAP.

It belongs to the Stoned B family. As to quaternary structure, interacts with the second C2 domain of Syt.

It is found in the cytoplasm. Its subcellular location is the synapse. Its function is as follows. Adapter protein involved in endocytic recycling of synaptic vesicles membranes. May act by mediating the retrieval of synaptotagmin protein Syt from the plasma membrane, thereby facilitating the internalization of multiple synaptic vesicles from the plasma membrane. The protein is Protein stoned-B (stnB) of Drosophila melanogaster (Fruit fly).